The chain runs to 187 residues: Preprocaerulein clone PXC202 (187 aa).

Residues 1–9 (NDERRFADG) constitute a propeptide that is removed on maturation. A disordered region spans residues 1–21 (NDERRFADGQQDYTGWMDFGR). At Y13 the chain carries Sulfotyrosine. At F19 the chain carries Phenylalanine amide. The propeptide occupies 23–73 (DDEDDVNERDVRGFGSFLGKALKAALKIGANALGGSPQQREANDERRFADG). Y77 is subject to Sulfotyrosine. The residue at position 83 (F83) is a Phenylalanine amide. A propeptide spanning residues 87-137 (DDEDDVNERDVRGFGSFLGKALKAALKIGANALGGSLQQREVNDERRFADG) is cleaved from the precursor. The residue at position 141 (Y141) is a Sulfotyrosine. F147 is modified (phenylalanine amide). A propeptide spanning residues 151-152 (DG) is cleaved from the precursor. Y156 carries the sulfotyrosine modification. F162 bears the Phenylalanine amide mark. Positions 166–187 (DDEDDVHERDVRGFGSFLGKAL) are excised as a propeptide.

It belongs to the gastrin/cholecystokinin family. Expressed by the skin glands.

The protein localises to the secreted. In terms of biological role, the pharmacological activities of caerulein are quite similar to the physiological activities of gastrin and related peptides. The protein is Preprocaerulein clone PXC202 of Xenopus laevis (African clawed frog).